Reading from the N-terminus, the 375-residue chain is Fluoride export protein 2 (375 aa).

At 1–11 the chain is on the cytoplasmic side; the sequence is MIFNPVISNHK. Residues 12 to 32 traverse the membrane as a helical segment; sequence LSHYIHVFCTFTTFCILGTET. The Extracellular portion of the chain corresponds to 33 to 34; it reads RQ. A helical transmembrane segment spans residues 35–55; sequence AITALSTYTPAFVTAPTVLWS. The Cytoplasmic segment spans residues 56–79; the sequence is NCSSCMLMGIMQSLNAYTWMKDHQ. The helical transmembrane segment at 80 to 100 threads the bilayer; the sequence is VLFLGVTTGYCGALSSFSSML. The Extracellular portion of the chain corresponds to 101-127; the sequence is LEMFEHSTNLTNGNIANHTKLPNRAYG. N109 and N117 each carry an N-linked (GlcNAc...) asparagine glycan. Residues 128–148 traverse the membrane as a helical segment; it reads IMEFLSVLLVHLMVSMGSLIF. Residues 149-213 lie on the Cytoplasmic side of the membrane; it reads GRQLGKEVIV…FKKFFDVVDK (65 aa). A helical transmembrane segment spans residues 214-234; the sequence is LAYALAFPLIILFVVLCAYYE. The N-linked (GlcNAc...) asparagine glycan is linked to N235. The Extracellular segment spans residues 235–241; that stretch reads NYSRGKW. A helical membrane pass occupies residues 242-262; it reads TLPCLFGIFAGFLRYWLAEMF. Residues 263–268 are Cytoplasmic-facing; that stretch reads NKTNKK. Residues 269–289 traverse the membrane as a helical segment; the sequence is FPLGTFLANVFATLLIGIFTM. Residues 290-310 lie on the Extracellular side of the membrane; the sequence is VQRGKKHFSTDIPIVNSLNSC. A helical membrane pass occupies residues 311–331; sequence HIVSALISGFCGTLSTISTFI. Over 332–338 the chain is Cytoplasmic; that stretch reads NEGYKLS. Residues 339–359 traverse the membrane as a helical segment; that stretch reads FINMLIYYTVSIGISYCLLVI. Residues 360 to 375 lie on the Extracellular side of the membrane; it reads TLGSYAWTRGLTNPIC.

Belongs to the fluoride channel Fluc/FEX (TC 1.A.43) family.

Its subcellular location is the cell membrane. It carries out the reaction fluoride(in) = fluoride(out). Its function is as follows. Fluoride channel required for the rapid expulsion of cytoplasmic fluoride. This Saccharomyces cerevisiae (strain ATCC 204508 / S288c) (Baker's yeast) protein is Fluoride export protein 2.